A 63-amino-acid chain; its full sequence is Small ribosomal subunit protein bS21 (63 aa).

Belongs to the bacterial ribosomal protein bS21 family.

This is Small ribosomal subunit protein bS21 from Azobacteroides pseudotrichonymphae genomovar. CFP2.